The primary structure comprises 731 residues: RNA-binding protein RMD9-like, mitochondrial (731 aa).

Over residues 1 to 10 (MIRLAQQTQV) the composition is skewed to polar residues. Disordered regions lie at residues 1–29 (MIRL…NSLT), 77–133 (GGNI…GNSI), and 590–630 (QNDR…FNNP). The span at 83–100 (NNNNHLAQNNSNNSNNHH) shows a compositional bias: low complexity. Basic residues predominate over residues 101–122 (NNNRNHHHNNNRNHHQNNHNHS). S132 bears the Phosphoserine mark. Over residues 598-617 (SNMNSTQISRTATPSPSLTP) the composition is skewed to polar residues.

It belongs to the RMD9 family. In terms of assembly, monomer. Phosphorylated. Phosphorylation promotes binding to RNA.

It localises to the mitochondrion inner membrane. Its function is as follows. May be involved in the processing or stability of mitochondrial mRNAs. This is RNA-binding protein RMD9-like, mitochondrial from Saccharomyces cerevisiae (strain ATCC 204508 / S288c) (Baker's yeast).